Here is a 377-residue protein sequence, read N- to C-terminus: Protein-glutamate methylesterase/protein-glutamine glutaminase 1 (377 aa).

A Response regulatory domain is found at 4 to 121 (KVLVVDDSSF…ARNRDEAVTL (118 aa)). Asp-55 bears the 4-aspartylphosphate mark. The tract at residues 138-170 (RPAAPRPAPTTSIAASSSLSQERAAATSPLGNR) is disordered. A compositionally biased stretch (low complexity) spans 146 to 157 (PTTSIAASSSLS). Residues 184-377 (SGKKYQLTAI…ERMLVEVGLA (194 aa)) form the CheB-type methylesterase domain. Active-site residues include Ser-196, His-223, and Asp-319.

Belongs to the CheB family. In terms of processing, phosphorylated by CheA. Phosphorylation of the N-terminal regulatory domain activates the methylesterase activity.

The protein resides in the cytoplasm. The catalysed reaction is [protein]-L-glutamate 5-O-methyl ester + H2O = L-glutamyl-[protein] + methanol + H(+). It catalyses the reaction L-glutaminyl-[protein] + H2O = L-glutamyl-[protein] + NH4(+). Functionally, involved in chemotaxis. Part of a chemotaxis signal transduction system that modulates chemotaxis in response to various stimuli. Catalyzes the demethylation of specific methylglutamate residues introduced into the chemoreceptors (methyl-accepting chemotaxis proteins or MCP) by CheR. Also mediates the irreversible deamidation of specific glutamine residues to glutamic acid. This is Protein-glutamate methylesterase/protein-glutamine glutaminase 1 from Vibrio cholerae serotype O1 (strain ATCC 39315 / El Tor Inaba N16961).